We begin with the raw amino-acid sequence, 194 residues long: Ras-like protein rasS (194 aa).

10 to 17 (GPGGVGKS) is a binding site for GTP. The short motif at 32-40 (YDPTLEDSY) is the Effector region element. GTP contacts are provided by residues 57-61 (DTAGQ) and 116-119 (NKCD). A disordered region spans residues 168–194 (RQSNQHSNSQEQNTDQPIKKKKSCNLL). A compositionally biased stretch (low complexity) spans 169–180 (QSNQHSNSQEQN). Cys-191 is modified (cysteine methyl ester). Cys-191 is lipidated: S-geranylgeranyl cysteine. Positions 192–194 (NLL) are cleaved as a propeptide — removed in mature form.

The protein belongs to the small GTPase superfamily. Ras family.

Its subcellular location is the cell membrane. The enzyme catalyses GTP + H2O = GDP + phosphate + H(+). In terms of biological role, ras proteins bind GDP/GTP and possess intrinsic GTPase activity. This is Ras-like protein rasS (rasS) from Dictyostelium discoideum (Social amoeba).